We begin with the raw amino-acid sequence, 66 residues long: Large ribosomal subunit protein bL32 (66 aa).

Residues methionine 1 to arginine 18 show a composition bias toward basic residues. The segment at methionine 1–aspartate 21 is disordered.

The protein belongs to the bacterial ribosomal protein bL32 family.

In Mycoplasmopsis agalactiae (strain NCTC 10123 / CIP 59.7 / PG2) (Mycoplasma agalactiae), this protein is Large ribosomal subunit protein bL32.